We begin with the raw amino-acid sequence, 1347 residues long: BTB/POZ domain-containing protein 1 (1347 aa).

2 ANK repeats span residues 51 to 81 and 86 to 115; these read YGRTVLHIAVSENKNSFVRSLLQHKGIDVFV and SGYTALHRAIYVGNLEAASLLLSKDPSFRS. 4 RCC1 repeats span residues 148–198, 215–264, 265–322, and 324–372; these read GNEL…DKIL, SQNV…ALTK, FGSI…AWTD, and DIYS…CLLQ. BTB domains are found at residues 619–698 and 758–829; these read SDVT…LSPW and MDTV…VELF. 4 disordered regions span residues 1006-1029, 1104-1139, 1193-1237, and 1286-1347; these read SSNQSDSLNKEDAEEKSPKPNVVN, EKADASTTTVLSDSRFMKAPTKKSQREKKKELSKQV, EGSS…PLSI, and GILK…RAVK. Residues 1013–1023 are compositionally biased toward basic and acidic residues; sequence LNKEDAEEKSP. 2 stretches are compositionally biased toward polar residues: residues 1208–1237 and 1297–1306; these read SNGSPTSWNLLTKPSPRSASLPKNSQPLSI and NRKQGQASKQ. A compositionally biased stretch (basic residues) spans 1336–1347; it reads TTHKKGKARAVK.

Interacts with cul3.

The protein operates within protein modification; protein ubiquitination. Its function is as follows. Probable substrate-specific adapter of an E3 ubiquitin-protein ligase complex which mediates the ubiquitination and subsequent proteasomal degradation of target proteins. This Schizosaccharomyces pombe (strain 972 / ATCC 24843) (Fission yeast) protein is BTB/POZ domain-containing protein 1 (btb1).